A 455-amino-acid chain; its full sequence is Phosphoglucosamine mutase (455 aa).

The active-site Phosphoserine intermediate is the Ser107. Positions 107, 247, 249, and 251 each coordinate Mg(2+). Ser107 carries the phosphoserine modification.

Belongs to the phosphohexose mutase family. Requires Mg(2+) as cofactor. In terms of processing, activated by phosphorylation.

The catalysed reaction is alpha-D-glucosamine 1-phosphate = D-glucosamine 6-phosphate. Catalyzes the conversion of glucosamine-6-phosphate to glucosamine-1-phosphate. The sequence is that of Phosphoglucosamine mutase from Leuconostoc citreum (strain KM20).